A 438-amino-acid chain; its full sequence is uncharacterized protein (438 aa).

A signal peptide spans 1–32 (MARPLLGKTSSVRRRLESLSACSIFFFLRKFC).

This is an uncharacterized protein from Frog virus 3 (isolate Goorha) (FV-3).